We begin with the raw amino-acid sequence, 353 residues long: uncharacterized protein (353 aa).

The tract at residues 69-106 (ISSATPSSTPPATRASSRLQPPKGHQAGGSNSQQQQPS) is disordered. Low complexity predominate over residues 70–86 (SSATPSSTPPATRASSR). A coiled-coil region spans residues 319 to 353 (GENKEKKMREMSRVYREMTRQMDDTRRDLDRLNQG).

This is an uncharacterized protein from Gibberella zeae (strain ATCC MYA-4620 / CBS 123657 / FGSC 9075 / NRRL 31084 / PH-1) (Wheat head blight fungus).